An 895-amino-acid polypeptide reads, in one-letter code: Zyg eleven-related protein 1 (895 aa).

2 disordered regions span residues 58–78 (HGPA…PDQG) and 195–221 (RGQM…SDHQ). A compositionally biased stretch (low complexity) spans 205–220 (SPLSPSSQPSSIQSDH).

Interacts with elc-1. Part of an E3 ubiquitin ligase complex including zer-11, cul-2 and elc-1.

Its function is as follows. Acts as a target recruitment subunit in the E3 ubiquitin ligase complex zer-1-cul-2-elc-1. This Caenorhabditis elegans protein is Zyg eleven-related protein 1 (zer-1).